A 485-amino-acid chain; its full sequence is ATP-dependent 6-phosphofructokinase 7 (485 aa).

ATP is bound by residues Gly101, Arg164–Gly165, and Gly189–Thr192. Asp190 lines the Mg(2+) pocket. Substrate-binding positions include Thr218–Asp220, Met263–Arg265, Glu319, and Tyr374–Arg377. The active-site Proton acceptor is Asp220. The disordered stretch occupies residues Ser449–Lys485. A compositionally biased stretch (basic and acidic residues) spans Asp455–Pro464.

It belongs to the phosphofructokinase type A (PFKA) family. PPi-dependent PFK group II subfamily. Atypical ATP-dependent clade 'X' sub-subfamily. In terms of assembly, homotetramer. Mg(2+) is required as a cofactor. As to expression, expressed in roots, leaves, stems and flowers.

Its subcellular location is the cytoplasm. The enzyme catalyses beta-D-fructose 6-phosphate + ATP = beta-D-fructose 1,6-bisphosphate + ADP + H(+). Its pathway is carbohydrate degradation; glycolysis; D-glyceraldehyde 3-phosphate and glycerone phosphate from D-glucose: step 3/4. With respect to regulation, allosterically activated by AMP. Its function is as follows. Catalyzes the phosphorylation of D-fructose 6-phosphate to fructose 1,6-bisphosphate by ATP, the first committing step of glycolysis. The protein is ATP-dependent 6-phosphofructokinase 7 of Arabidopsis thaliana (Mouse-ear cress).